Consider the following 2035-residue polypeptide: Proline-rich protein 12 (2035 aa).

Disordered stretches follow at residues 210–280 (GGGV…ERAL), 292–311 (RPAS…LQHY), 329–584 (CSPL…GAPG), and 645–685 (QAPS…GTPY). A compositionally biased stretch (pro residues) spans 223–240 (QTPPYRPGPPDPPPPPRH). Over residues 249–261 (ASSSAATAAEPSS) the composition is skewed to low complexity. Over residues 296 to 305 (AQPPPPPPPA) the composition is skewed to pro residues. Phosphoserine is present on residues Ser-330 and Ser-338. A compositionally biased stretch (low complexity) spans 338-364 (SPGAGEPSKGGPSGATAGAAGRATGPE). Positions 365–377 (TAGGGAAGGGGGY) are enriched in gly residues. Composition is skewed to low complexity over residues 408 to 429 (STAT…AGKA) and 437 to 455 (SQAY…QAYG). A compositionally biased stretch (pro residues) spans 476 to 487 (PPQPPSGPPPPG). Composition is skewed to polar residues over residues 490–501 (TCQSYSPDQLQG) and 520–534 (GLPT…STGH). Residues 540 to 555 (GHGGGWGPSSLGGGGE) are compositionally biased toward gly residues. Phosphoserine is present on Ser-648. The span at 670–681 (GLGGSGGAGGAP) shows a compositional bias: gly residues. Thr-735 bears the Phosphothreonine mark. 4 disordered regions span residues 755–844 (AFLQ…PLQL), 851–870 (HGLE…SLEP), 879–920 (GALE…APRF), and 946–1061 (EMFG…CSTK). Pro residues predominate over residues 830–841 (PQPPPPPPPPMP). Ser-859 is subject to Phosphoserine. Residues 1031–1046 (SAPPPPPPPPPPPPVS) show a composition bias toward pro residues. Residues Ser-1070 and Ser-1128 each carry the phosphoserine modification. Disordered regions lie at residues 1112–1244 (RRLP…DHNS), 1288–1355 (PLYQ…SPCK), 1367–1567 (TLPS…GEGI), and 1662–1839 (HRPP…PGRL). Positions 1190 to 1199 (KPRGRGRGRG) are enriched in basic residues. Basic and acidic residues predominate over residues 1200-1214 (RKAEEMGGTRLEPLK). Residue Lys-1214 is modified to N6-acetyllysine. Position 1295 is a phosphothreonine (Thr-1295). Ser-1299 is modified (phosphoserine). Residues 1314–1329 (QPPPPTVPTVPHPAPS) show a composition bias toward pro residues. Ser-1372, Ser-1373, and Ser-1378 each carry phosphoserine. The segment covering 1449–1529 (PPTPPPAPTP…PPEEPPAPSP (81 aa)) has biased composition (pro residues). The segment covering 1535 to 1547 (PDARPLHLAKKQE) has biased composition (basic and acidic residues). Position 1555 is a phosphothreonine (Thr-1555). Residue Ser-1562 is modified to Phosphoserine. Positions 1698 to 1709 (ETPEKMTSEKPP) are enriched in basic and acidic residues. Thr-1699 is modified (phosphothreonine). Residues 1710–1730 (EPAPEPAVPEPPAPEKPSPPR) are compositionally biased toward pro residues. Residues 1731 to 1768 (PVEKEKEKEKEKEKEKERVTRPLRSERATSGRQMRTDR) show a composition bias toward basic and acidic residues. A compositionally biased stretch (polar residues) spans 1769 to 1779 (SLATGQSTTSR). Positions 1817–1828 (SSSDSESSPGAP) are enriched in low complexity. The residue at position 1924 (Ser-1924) is a Phosphoserine.

As to expression, expressed in brain.

Its subcellular location is the nucleus. The protein resides in the postsynaptic density. It localises to the synapse. It is found in the synaptosome. The protein is Proline-rich protein 12 of Mus musculus (Mouse).